We begin with the raw amino-acid sequence, 389 residues long: Probable peptidoglycan glycosyltransferase FtsW (389 aa).

The Cytoplasmic portion of the chain corresponds to 1–14 (MPIRDWRQQSQRWP). A helical transmembrane segment spans residues 15-35 (IDYWLIGALAILITLGLTMVA). The Periplasmic segment spans residues 36–57 (SSSIAISEKRFGDPTHYLLRQM). The helical transmembrane segment at 58 to 78 (FSMGLGLMAAYIVLKIPLSFW) threads the bilayer. Residues 79–84 (RKHRGQ) are Cytoplasmic-facing. A helical membrane pass occupies residues 85 to 105 (LFIVGLVLLVLVLVFGREING). Topologically, residues 106 to 111 (SKRWLP) are periplasmic. The helical transmembrane segment at 112 to 132 (LVLMNFQVSEFMKIAVVVFMA) threads the bilayer. Residues 133-144 (GYLDRHATAVRE) are Cytoplasmic-facing. A helical transmembrane segment spans residues 145–165 (SFEAVIRLALPFGVMAILLLL). The Periplasmic portion of the chain corresponds to 166 to 168 (EPD). The chain crosses the membrane as a helical span at residues 169 to 189 (FGSTFVIAVIITGMLLIAGAP). At 190-191 (WR) the chain is on the cytoplasmic side. The helical transmembrane segment at 192 to 212 (FFVMTVLPIATLLVMMVITSP) threads the bilayer. Over 213–268 (YRMARVTNFLDPWSDPFGNGYQLTQALIASGRGEWFGVGIGESVQKLLYLPDAHTD) the chain is Periplasmic. Residues 269–289 (FLFSIYAEEYGLIGVAFLALL) traverse the membrane as a helical segment. At 290–310 (YLTLLYRCFRIGRKAFNQTHY) the chain is on the cytoplasmic side. Residues 311-331 (FGGLIAYGVGIWIVLQAMINM) form a helical membrane-spanning segment. Residues 332-344 (GVNLGLFPTKGLT) are Periplasmic-facing. Residues 345–365 (LPFMSYGGSSVLMLFIGVAMV) form a helical membrane-spanning segment. Topologically, residues 366-389 (LRVDLETRQAVLEHSVDESGQGKR) are cytoplasmic.

It belongs to the SEDS family. FtsW subfamily.

The protein localises to the cell inner membrane. It carries out the reaction [GlcNAc-(1-&gt;4)-Mur2Ac(oyl-L-Ala-gamma-D-Glu-L-Lys-D-Ala-D-Ala)](n)-di-trans,octa-cis-undecaprenyl diphosphate + beta-D-GlcNAc-(1-&gt;4)-Mur2Ac(oyl-L-Ala-gamma-D-Glu-L-Lys-D-Ala-D-Ala)-di-trans,octa-cis-undecaprenyl diphosphate = [GlcNAc-(1-&gt;4)-Mur2Ac(oyl-L-Ala-gamma-D-Glu-L-Lys-D-Ala-D-Ala)](n+1)-di-trans,octa-cis-undecaprenyl diphosphate + di-trans,octa-cis-undecaprenyl diphosphate + H(+). The protein operates within cell wall biogenesis; peptidoglycan biosynthesis. Functionally, peptidoglycan polymerase that is essential for cell division. This Hydrogenovibrio crunogenus (strain DSM 25203 / XCL-2) (Thiomicrospira crunogena) protein is Probable peptidoglycan glycosyltransferase FtsW.